The primary structure comprises 188 residues: Large ribosomal subunit protein bL35m (188 aa).

It belongs to the bacterial ribosomal protein bL35 family.

The protein resides in the mitochondrion. This is Large ribosomal subunit protein bL35m (Mrpl35) from Mus musculus (Mouse).